Reading from the N-terminus, the 490-residue chain is Cobyric acid synthase (490 aa).

The 188-residue stretch at 252–439 (RLKVVVPVLP…LHGLFESTAA (188 aa)) folds into the GATase cobBQ-type domain. The active-site Nucleophile is Cys-333. The active site involves His-431.

It belongs to the CobB/CobQ family. CobQ subfamily.

The protein operates within cofactor biosynthesis; adenosylcobalamin biosynthesis. Catalyzes amidations at positions B, D, E, and G on adenosylcobyrinic A,C-diamide. NH(2) groups are provided by glutamine, and one molecule of ATP is hydrogenolyzed for each amidation. In Pseudomonas paraeruginosa (strain DSM 24068 / PA7) (Pseudomonas aeruginosa (strain PA7)), this protein is Cobyric acid synthase.